Here is a 341-residue protein sequence, read N- to C-terminus: Phenylalanine--tRNA ligase alpha subunit (341 aa).

Glu-252 is a Mg(2+) binding site.

Belongs to the class-II aminoacyl-tRNA synthetase family. Phe-tRNA synthetase alpha subunit type 1 subfamily. Tetramer of two alpha and two beta subunits. Mg(2+) is required as a cofactor.

It is found in the cytoplasm. It carries out the reaction tRNA(Phe) + L-phenylalanine + ATP = L-phenylalanyl-tRNA(Phe) + AMP + diphosphate + H(+). In Malacoplasma penetrans (strain HF-2) (Mycoplasma penetrans), this protein is Phenylalanine--tRNA ligase alpha subunit.